We begin with the raw amino-acid sequence, 213 residues long: MEESRLILALDVYDRERALEIAECTADYLWAIKVNWPLIIGSGLKIITELKQVTGLPIIADLKLADIPNTNRLIASKVFEAGADYIIAHGFVGRDSVEAVMELGKTIIVVEMSHPGAKEFIQPVTDKLIELANELEPFGVIAPATRPERVSYIRSRLERGIRILTPGVGAQGGKASDAIKAGADYVIVGRSIYGSNNPREAARRLYEEILEVV.

Substrate contacts are provided by residues aspartate 11, lysine 33, 61-70 (DLKLADIPNT), serine 113, 166-176 (PGVGAQGGKAS), glycine 189, and arginine 190. Catalysis depends on lysine 63, which acts as the Proton donor.

The protein belongs to the OMP decarboxylase family. Type 1 subfamily. Homodimer.

It carries out the reaction orotidine 5'-phosphate + H(+) = UMP + CO2. The protein operates within pyrimidine metabolism; UMP biosynthesis via de novo pathway; UMP from orotate: step 2/2. Catalyzes the decarboxylation of orotidine 5'-monophosphate (OMP) to uridine 5'-monophosphate (UMP). This chain is Orotidine 5'-phosphate decarboxylase, found in Thermococcus kodakarensis (strain ATCC BAA-918 / JCM 12380 / KOD1) (Pyrococcus kodakaraensis (strain KOD1)).